The following is a 376-amino-acid chain: Palmitoyl-[acyl-carrier-protein] 4-desaturase 2, chloroplastic (376 aa).

The transit peptide at 1 to 33 (MELHLALRASPLPAADPGRRPPPPRGNFATNCT) directs the protein to the chloroplast. Fe cation is bound by residues Glu114, Glu149, His152, Glu202, Glu235, and His238.

The protein belongs to the fatty acid desaturase type 2 family. Homodimer. Fe(2+) is required as a cofactor. In terms of tissue distribution, preferentially expressed in the flower labellum.

It localises to the plastid. The protein resides in the chloroplast stroma. It catalyses the reaction hexadecanoyl-[ACP] + 2 reduced [2Fe-2S]-[ferredoxin] + O2 + 2 H(+) = (4Z)-hexadecenoyl-[ACP] + 2 oxidized [2Fe-2S]-[ferredoxin] + 2 H2O. The catalysed reaction is octadecanoyl-[ACP] + 2 reduced [2Fe-2S]-[ferredoxin] + O2 + 2 H(+) = (9Z)-octadecenoyl-[ACP] + 2 oxidized [2Fe-2S]-[ferredoxin] + 2 H2O. The protein operates within lipid metabolism; fatty acid metabolism. Its function is as follows. Converts stearoyl-ACP to oleoyl-ACP by introduction of a cis double bond between carbons 9 and 10 of the acyl chain. Converts palmitoyl-ACP to (4Z)-hexadec-4-enoyl-ACP by introduction of a cis double bond between carbons 4 and 5 of the acyl chain. Catalyzes the desaturation of saturated fatty acid 18:0 and 16:0 to generate 18:1 (delta-9) and 16:1 (delta-4) intermediates, expected to give rise to 9-alkenes and 12-alkenes, respectively. In Ophrys arachnitiformis subsp. archipelagi (Orchid), this protein is Palmitoyl-[acyl-carrier-protein] 4-desaturase 2, chloroplastic (SAD2).